The primary structure comprises 487 residues: Glutamate--tRNA ligase (487 aa).

Residues 11–21 (PSPTGYPHLGN) carry the 'HIGH' region motif. Zn(2+) is bound by residues C108, C110, C135, and D137. The short motif at 245 to 249 (KLSKR) is the 'KMSKS' region element. K248 is a binding site for ATP.

Belongs to the class-I aminoacyl-tRNA synthetase family. Glutamate--tRNA ligase type 1 subfamily. As to quaternary structure, monomer. The cofactor is Zn(2+).

Its subcellular location is the cytoplasm. It carries out the reaction tRNA(Glu) + L-glutamate + ATP = L-glutamyl-tRNA(Glu) + AMP + diphosphate. Functionally, catalyzes the attachment of glutamate to tRNA(Glu) in a two-step reaction: glutamate is first activated by ATP to form Glu-AMP and then transferred to the acceptor end of tRNA(Glu). The sequence is that of Glutamate--tRNA ligase from Dehalococcoides mccartyi (strain ATCC BAA-2100 / JCM 16839 / KCTC 5957 / BAV1).